The chain runs to 191 residues: dITP/XTP pyrophosphatase (191 aa).

Substrate is bound at residue 8 to 13; it reads SKNQGK. Positions 38 and 67 each coordinate Mg(2+). Asp-67 (proton acceptor) is an active-site residue. Substrate-binding positions include Ser-68, 146–149, Lys-169, and 174–175; these read FGYD and HR.

It belongs to the HAM1 NTPase family. In terms of assembly, homodimer. Requires Mg(2+) as cofactor.

It carries out the reaction XTP + H2O = XMP + diphosphate + H(+). It catalyses the reaction dITP + H2O = dIMP + diphosphate + H(+). The enzyme catalyses ITP + H2O = IMP + diphosphate + H(+). In terms of biological role, pyrophosphatase that catalyzes the hydrolysis of nucleoside triphosphates to their monophosphate derivatives, with a high preference for the non-canonical purine nucleotides XTP (xanthosine triphosphate), dITP (deoxyinosine triphosphate) and ITP. Seems to function as a house-cleaning enzyme that removes non-canonical purine nucleotides from the nucleotide pool, thus preventing their incorporation into DNA/RNA and avoiding chromosomal lesions. The chain is dITP/XTP pyrophosphatase from Prochlorococcus marinus subsp. pastoris (strain CCMP1986 / NIES-2087 / MED4).